The following is a 183-amino-acid chain: Apo-citrate lyase phosphoribosyl-dephospho-CoA transferase (183 aa).

The protein belongs to the CitX family.

The enzyme catalyses apo-[citrate lyase ACP] + 2'-(5''-triphospho-alpha-D-ribosyl)-3'-dephospho-CoA = holo-[citrate lyase ACP] + diphosphate. Functionally, transfers 2-(5''-triphosphoribosyl)-3'-dephosphocoenzyme-A on a serine residue to the apo-acyl carrier protein (gamma chain) of the citrate lyase to yield holo-acyl carrier protein. This Shigella flexneri serotype 5b (strain 8401) protein is Apo-citrate lyase phosphoribosyl-dephospho-CoA transferase.